The sequence spans 187 residues: POM121 and ZP3 fusion protein (187 aa).

Residues Gly166–Leu187 form a disordered region. Over residues Val177–Leu187 the composition is skewed to polar residues.

As to expression, expressed in spleen, thymus, pancreas, testis, ovary, small intestine, colon and lymphocytes.

In Homo sapiens (Human), this protein is POM121 and ZP3 fusion protein (POMZP3).